The chain runs to 177 residues: Interleukin-25 (177 aa).

The first 32 residues, 1–32 (MRERPRLGEDSSLISLFLQVVAFLAMVMGTHT), serve as a signal peptide directing secretion. The disordered stretch occupies residues 58–81 (PVPPLEPARPNRHPESCRASEDGP). Over residues 69 to 78 (RHPESCRASE) the composition is skewed to basic and acidic residues. 2 cysteine pairs are disulfide-bonded: C110–C168 and C115–C170. N136 carries N-linked (GlcNAc...) asparagine glycosylation.

The protein belongs to the IL-17 family. As to expression, expressed at low levels in several tissues, including brain, kidney, lung, prostate, testis, spinal cord, adrenal gland, and trachea.

It is found in the secreted. Its function is as follows. Cytokine produced by various cells such as eosinophils, T-helper type 2 (Th2) cells or epithelial cells that plays a role in internal safety of adaptive immune responses by regulating cytokine production. Promotes and augments T-helper type 2 responses locally or systemically. Exerts its activity via its receptor composed of IL17RA and IL17RB for signal transduction. In turn, stimulates the JAK2-STAT5A pathway and promotes the secretion of type-2 associated cytokines including IL4, IL9 and IL13. Also induces the release of IL8, and IL6 from eosinophils through the combined activation of MAPK and NF-kappa-B pathways. Inhibits the differentiation of T-helper (Th17) cells via the production of IL4, IL5 and IL13. The polypeptide is Interleukin-25 (IL25) (Homo sapiens (Human)).